Consider the following 269-residue polypeptide: Hydroxyethylthiazole kinase (269 aa).

Met41 lines the substrate pocket. Residues Arg117 and Ser163 each coordinate ATP. Position 190 (Gly190) interacts with substrate.

Belongs to the Thz kinase family. Requires Mg(2+) as cofactor.

It catalyses the reaction 5-(2-hydroxyethyl)-4-methylthiazole + ATP = 4-methyl-5-(2-phosphooxyethyl)-thiazole + ADP + H(+). The protein operates within cofactor biosynthesis; thiamine diphosphate biosynthesis; 4-methyl-5-(2-phosphoethyl)-thiazole from 5-(2-hydroxyethyl)-4-methylthiazole: step 1/1. In terms of biological role, catalyzes the phosphorylation of the hydroxyl group of 4-methyl-5-beta-hydroxyethylthiazole (THZ). This is Hydroxyethylthiazole kinase from Latilactobacillus sakei subsp. sakei (strain 23K) (Lactobacillus sakei subsp. sakei).